The primary structure comprises 309 residues: MAGTGVVAVYGNGAITETKKSPFSVKVGLAQMLRGGVIMDVVNPEQARIAEEAGACAVMALERVPADIRAQGGVARMSDPQLIKEIKQSVTIPVMAKARIGHFVEAQILEAIGIDYVDESEVLTPADEENHINKHNFRIPFVCGCRNLGEALRRIREGAAMIRTKGEAGTGNVIEAVRHVRSVMGDIRLLRNMDDDEVFTFAKKIAAPYDLVMQTKQLGRLPVVQFAAGGVATPADAALMMQLGCDGVFVGSGVFKSGDPARRARAIVQAVTHYSDPDMLAEVSCGLGEAMVGINLNDKKVERFANRSE.

Asp40 lines the D-ribose 5-phosphate pocket. Catalysis depends on Lys97, which acts as the Schiff-base intermediate with D-ribose 5-phosphate. A D-ribose 5-phosphate-binding site is contributed by Gly169. Residue Arg181 coordinates D-glyceraldehyde 3-phosphate. Residues Gly230 and 251–252 each bind D-ribose 5-phosphate; that span reads GS.

It belongs to the PdxS/SNZ family.

It catalyses the reaction aldehydo-D-ribose 5-phosphate + D-glyceraldehyde 3-phosphate + L-glutamine = pyridoxal 5'-phosphate + L-glutamate + phosphate + 3 H2O + H(+). It functions in the pathway cofactor biosynthesis; pyridoxal 5'-phosphate biosynthesis. Catalyzes the formation of pyridoxal 5'-phosphate from ribose 5-phosphate (RBP), glyceraldehyde 3-phosphate (G3P) and ammonia. The ammonia is provided by PDX2. Can also use ribulose 5-phosphate and dihydroxyacetone phosphate as substrates, resulting from enzyme-catalyzed isomerization of RBP and G3P, respectively. Also plays an indirect role in resistance to singlet oxygen-generating photosensitizers. This is Probable pyridoxal 5'-phosphate synthase subunit PDX1 (PDX1) from Hevea brasiliensis (Para rubber tree).